The primary structure comprises 281 residues: MGIEFTKYHGLGNDFILIDNRHGSEPMVSPEMAVEMCDRHFGIGADGVIFVLPGTSQTDYQMRIFNSDGSEPEMCGNGIRCLAQFIAELEKTTEVGKSYRIDTLGGLMTPRLEAQEQVTVDMGLPRLLGSEIPTTLVSRTEKVIDQPIEVAGQSWLVTCVSMGNPHCITFVEDVKSIALETIGPQFEHHVAFPQRTNTEFIEVLRPDYLKMRVWERGAGITLACGTGACASVVAGVLTGKSDRRCTVELPGGCLSIYWSETDGHVYMTGPAKRVFTGVYEM.

Substrate contacts are provided by asparagine 13 and asparagine 66. Residue cysteine 75 is the Proton donor of the active site. Residues 76–77 (GN), asparagine 164, asparagine 197, and 215–216 (ER) each bind substrate. The active-site Proton acceptor is the cysteine 224. Residue 225–226 (GT) coordinates substrate.

It belongs to the diaminopimelate epimerase family. In terms of assembly, homodimer.

It localises to the cytoplasm. It catalyses the reaction (2S,6S)-2,6-diaminopimelate = meso-2,6-diaminopimelate. Its pathway is amino-acid biosynthesis; L-lysine biosynthesis via DAP pathway; DL-2,6-diaminopimelate from LL-2,6-diaminopimelate: step 1/1. In terms of biological role, catalyzes the stereoinversion of LL-2,6-diaminopimelate (L,L-DAP) to meso-diaminopimelate (meso-DAP), a precursor of L-lysine and an essential component of the bacterial peptidoglycan. The chain is Diaminopimelate epimerase from Gloeothece citriformis (strain PCC 7424) (Cyanothece sp. (strain PCC 7424)).